Reading from the N-terminus, the 222-residue chain is 7-cyano-7-deazaguanine synthase (222 aa).

ATP is bound at residue 9 to 19 (ISGGMDSALSA). Cys188, Cys196, Cys199, and Cys202 together coordinate Zn(2+).

Belongs to the QueC family. The cofactor is Zn(2+).

The enzyme catalyses 7-carboxy-7-deazaguanine + NH4(+) + ATP = 7-cyano-7-deazaguanine + ADP + phosphate + H2O + H(+). It functions in the pathway purine metabolism; 7-cyano-7-deazaguanine biosynthesis. Its function is as follows. Catalyzes the ATP-dependent conversion of 7-carboxy-7-deazaguanine (CDG) to 7-cyano-7-deazaguanine (preQ(0)). The protein is 7-cyano-7-deazaguanine synthase of Sulfurovum sp. (strain NBC37-1).